We begin with the raw amino-acid sequence, 652 residues long: Set1 complex component ash2 (652 aa).

The interval 1 to 32 (MLAHGSNDYGVSLKGNKTGSSPSKASSLNWNE) is disordered. The segment covering 15 to 32 (GNKTGSSPSKASSLNWNE) has biased composition (polar residues). A PHD-type zinc finger spans residues 40–94 (NTYCYCGKDRNLRFPDLQCSVCLNMFHLSCLSPPCTSMMGFSTNYQFVCKHCTED). Positions 43, 45, 58, 61, 66, 69, 88, and 91 each coordinate Zn(2+). Positions 234–270 (RLVETETPPPSSSKLKEDYKDSKREMKRSNTPWSNAS) are disordered. Positions 247-261 (KLKEDYKDSKREMKR) are enriched in basic and acidic residues. The B30.2/SPRY domain maps to 330-519 (EAAKDLPNVM…KHNRYIDLPY (190 aa)).

This sequence belongs to the cclA family. As to quaternary structure, component of the Set1 complex composed of ash2, sdc1, set1, shg1, spp1, swd1, swd2 and swd3. Component of the Lid2 complex composed of ash2, jmj3, lid2, sdc1 and snt2.

It localises to the nucleus. Its function is as follows. Component of the COMPASS (Set1C) complex that specifically mono-, di- and trimethylates histone H3 to form H3K4me1/2/3, which subsequently plays a role in telomere length maintenance and transcription elongation regulation. Regulates MAPK pathway and sporulation through H3K4 methylation. This is Set1 complex component ash2 from Schizosaccharomyces pombe (strain 972 / ATCC 24843) (Fission yeast).